We begin with the raw amino-acid sequence, 569 residues long: Formate hydrogenlyase subunit 5 (569 aa).

The propeptide occupies 538-569 (MTVVDVRKKKSKVVPYKELERYSIERKNSPLK).

This sequence belongs to the complex I 49 kDa subunit family. In terms of assembly, FHL comprises of a formate dehydrogenase, unidentified electron carriers and a hydrogenase (isoenzyme 3). In this non-energy conserving pathway molecular hydrogen and carbodioxide from formate are released. Requires [4Fe-4S] cluster as cofactor. It depends on Ni(2+) as a cofactor.

In Escherichia coli (strain K12), this protein is Formate hydrogenlyase subunit 5 (hycE).